The primary structure comprises 231 residues: Small ribosomal subunit protein uS3 (231 aa).

The 70-residue stretch at V17 to Q86 folds into the KH type-2 domain.

The protein belongs to the universal ribosomal protein uS3 family. Part of the 30S ribosomal subunit.

In terms of biological role, binds the lower part of the 30S subunit head. The polypeptide is Small ribosomal subunit protein uS3 (Methanoregula boonei (strain DSM 21154 / JCM 14090 / 6A8)).